The primary structure comprises 475 residues: Ribulose bisphosphate carboxylase large chain (475 aa).

Residues 1–2 constitute a propeptide that is removed on maturation; that stretch reads MS. P3 carries the post-translational modification N-acetylproline. At K14 the chain carries N6,N6,N6-trimethyllysine. Positions 123 and 173 each coordinate substrate. The active-site Proton acceptor is the K175. K177 is a substrate binding site. Residues K201, D203, and E204 each coordinate Mg(2+). Residue K201 is modified to N6-carboxylysine. The active-site Proton acceptor is the H294. 3 residues coordinate substrate: R295, H327, and S379.

It belongs to the RuBisCO large chain family. Type I subfamily. Heterohexadecamer of 8 large chains and 8 small chains; disulfide-linked. The disulfide link is formed within the large subunit homodimers. The cofactor is Mg(2+). In terms of processing, the disulfide bond which can form in the large chain dimeric partners within the hexadecamer appears to be associated with oxidative stress and protein turnover.

It is found in the plastid. It localises to the chloroplast. The catalysed reaction is 2 (2R)-3-phosphoglycerate + 2 H(+) = D-ribulose 1,5-bisphosphate + CO2 + H2O. It carries out the reaction D-ribulose 1,5-bisphosphate + O2 = 2-phosphoglycolate + (2R)-3-phosphoglycerate + 2 H(+). Functionally, ruBisCO catalyzes two reactions: the carboxylation of D-ribulose 1,5-bisphosphate, the primary event in carbon dioxide fixation, as well as the oxidative fragmentation of the pentose substrate in the photorespiration process. Both reactions occur simultaneously and in competition at the same active site. The sequence is that of Ribulose bisphosphate carboxylase large chain from Pinus radiata (Monterey pine).